Reading from the N-terminus, the 130-residue chain is Small ribosomal subunit protein uS8 (130 aa).

Belongs to the universal ribosomal protein uS8 family. Part of the 30S ribosomal subunit.

Its function is as follows. One of the primary rRNA binding proteins, it binds directly to 16S rRNA central domain where it helps coordinate assembly of the platform of the 30S subunit. The chain is Small ribosomal subunit protein uS8 from Haloquadratum walsbyi (strain DSM 16790 / HBSQ001).